Consider the following 668-residue polypeptide: NADH-ubiquinone oxidoreductase chain 5 (668 aa).

A run of 18 helical transmembrane segments spans residues 1-21 (MYII…LFGH), 31-51 (IAVG…YEIL), 81-101 (LTSI…LYSM), 111-131 (TRFF…VTAD), 133-153 (FVQL…LINF), 178-198 (LFFG…SVIF), 211-231 (LLGY…IGVV), 251-271 (TPVS…FLVL), 283-303 (ILNI…TIGI), 311-331 (VIAY…GLLN), 339-359 (LTTH…VIHG), 375-395 (LMPL…GFPF), 421-441 (AIIG…LLIL), 462-482 (TNMV…GYLT), 519-539 (LLPL…YFNL), 566-586 (FDFL…YDVM), 629-649 (IVQA…IGFL), and 650-668 (YVEL…PKIK).

Belongs to the complex I subunit 5 family.

The protein localises to the mitochondrion inner membrane. It carries out the reaction a ubiquinone + NADH + 5 H(+)(in) = a ubiquinol + NAD(+) + 4 H(+)(out). Core subunit of the mitochondrial membrane respiratory chain NADH dehydrogenase (Complex I) that is believed to belong to the minimal assembly required for catalysis. Complex I functions in the transfer of electrons from NADH to the respiratory chain. The immediate electron acceptor for the enzyme is believed to be ubiquinone. This Dictyostelium citrinum (Slime mold) protein is NADH-ubiquinone oxidoreductase chain 5 (nad5).